The primary structure comprises 126 residues: Membrane-anchored ubiquitin-fold protein 2 (126 aa).

The Ubiquitin-like domain maps to 14–79 (VEVRFRLDDG…VLENNRTLAE (66 aa)). Cys123 carries the cysteine methyl ester modification. Cys123 is lipidated: S-geranylgeranyl cysteine. A propeptide spans 124–126 (TIL) (removed in mature form).

It is found in the cell membrane. Its function is as follows. May serve as docking site to facilitate the association of other proteins to the plasma membrane. In Oryza sativa subsp. japonica (Rice), this protein is Membrane-anchored ubiquitin-fold protein 2 (MUB2).